The primary structure comprises 122 residues: Large ribosomal subunit protein uL14 (122 aa).

This sequence belongs to the universal ribosomal protein uL14 family. Part of the 50S ribosomal subunit. Forms a cluster with proteins L3 and L19. In the 70S ribosome, L14 and L19 interact and together make contacts with the 16S rRNA in bridges B5 and B8.

Its function is as follows. Binds to 23S rRNA. Forms part of two intersubunit bridges in the 70S ribosome. The chain is Large ribosomal subunit protein uL14 from Rickettsia africae (strain ESF-5).